Here is a 419-residue protein sequence, read N- to C-terminus: Gamma-glutamyl phosphate reductase (419 aa).

The protein belongs to the gamma-glutamyl phosphate reductase family.

Its subcellular location is the cytoplasm. The enzyme catalyses L-glutamate 5-semialdehyde + phosphate + NADP(+) = L-glutamyl 5-phosphate + NADPH + H(+). The protein operates within amino-acid biosynthesis; L-proline biosynthesis; L-glutamate 5-semialdehyde from L-glutamate: step 2/2. In terms of biological role, catalyzes the NADPH-dependent reduction of L-glutamate 5-phosphate into L-glutamate 5-semialdehyde and phosphate. The product spontaneously undergoes cyclization to form 1-pyrroline-5-carboxylate. In Bordetella bronchiseptica (strain ATCC BAA-588 / NCTC 13252 / RB50) (Alcaligenes bronchisepticus), this protein is Gamma-glutamyl phosphate reductase.